The following is a 208-amino-acid chain: MGLGARGAWAALLLGTLQVLALLGAAHESAAMAASANIENSGLPHNSSANSTETLQHVPSDHTNETSNSTVKPPTSVASDSSNTTVTTMKPTAASNTTTPGMVSTNMTSTTLKSTPKTTSVSQNTSQISTSTMTVTHNSSVTSAASSVTITTTMHSEAKKGSKFDTGSFVGGIVLTLGVLSILYIGCKMYYSRRGIRYRTIDEHDAII.

Residues methionine 1 to alanine 26 form the signal peptide. Residues histidine 27–threonine 166 lie on the Extracellular side of the membrane. The segment covering glycine 42–histidine 57 has biased composition (polar residues). A disordered region spans residues glycine 42 to threonine 125. N-linked (GlcNAc...) asparagine glycosylation is found at asparagine 46, asparagine 50, asparagine 64, asparagine 68, asparagine 83, asparagine 96, and asparagine 106. Positions glutamate 65–methionine 107 are enriched in polar residues. Residues threonine 108–serine 122 are compositionally biased toward low complexity. 2 N-linked (GlcNAc...) asparagine glycosylation sites follow: asparagine 124 and asparagine 138. Residues glycine 167–cysteine 187 traverse the membrane as a helical segment. Over lysine 188 to isoleucine 208 the chain is Cytoplasmic.

This sequence belongs to the CD164 family. In terms of tissue distribution, ubiquitous. Not expressed in ovary. Expressed in keratinocytes.

Its subcellular location is the membrane. In terms of biological role, implicated in oncotic cell death, characterized by cell swelling, organelle swelling, vacuolization and increased membrane permeability. This chain is Porimin (TMEM123), found in Homo sapiens (Human).